Consider the following 250-residue polypeptide: Pyridoxine 5'-phosphate synthase (250 aa).

Residues N8 and R19 each contribute to the 3-amino-2-oxopropyl phosphate site. The active-site Proton acceptor is H44. 2 residues coordinate 1-deoxy-D-xylulose 5-phosphate: R46 and H51. Catalysis depends on E76, which acts as the Proton acceptor. T106 lines the 1-deoxy-D-xylulose 5-phosphate pocket. Residue H200 is the Proton donor of the active site. Residues D201 and 223–224 contribute to the 3-amino-2-oxopropyl phosphate site; that span reads GH.

This sequence belongs to the PNP synthase family. In terms of assembly, homooctamer; tetramer of dimers.

It localises to the cytoplasm. The catalysed reaction is 3-amino-2-oxopropyl phosphate + 1-deoxy-D-xylulose 5-phosphate = pyridoxine 5'-phosphate + phosphate + 2 H2O + H(+). It participates in cofactor biosynthesis; pyridoxine 5'-phosphate biosynthesis; pyridoxine 5'-phosphate from D-erythrose 4-phosphate: step 5/5. Its function is as follows. Catalyzes the complicated ring closure reaction between the two acyclic compounds 1-deoxy-D-xylulose-5-phosphate (DXP) and 3-amino-2-oxopropyl phosphate (1-amino-acetone-3-phosphate or AAP) to form pyridoxine 5'-phosphate (PNP) and inorganic phosphate. The sequence is that of Pyridoxine 5'-phosphate synthase from Rhizobium meliloti (strain 1021) (Ensifer meliloti).